Reading from the N-terminus, the 233-residue chain is tRNA pseudouridine synthase B (233 aa).

Asp-48 serves as the catalytic Nucleophile.

It belongs to the pseudouridine synthase TruB family. Type 1 subfamily.

It carries out the reaction uridine(55) in tRNA = pseudouridine(55) in tRNA. Functionally, responsible for synthesis of pseudouridine from uracil-55 in the psi GC loop of transfer RNAs. The protein is tRNA pseudouridine synthase B of Bacteroides fragilis (strain ATCC 25285 / DSM 2151 / CCUG 4856 / JCM 11019 / LMG 10263 / NCTC 9343 / Onslow / VPI 2553 / EN-2).